We begin with the raw amino-acid sequence, 404 residues long: 5-azacytidine-induced protein 2 (404 aa).

A homodimerization region spans residues 1-198 (MDTLVEDDIC…TELQKARQTG (198 aa)). A coiled-coil region spans residues 40 to 198 (ALVTAYEDIK…TELQKARQTG (159 aa)). The interval 229 to 269 (SDHMQHAYWELRREMANLHLVTRVQAELLRQLKTAAAGKAC) is interaction with TBK1 and IKBKE. Serine 330 carries the phosphoserine modification. 2 disordered regions span residues 332 to 351 (TDNERLTPNDGADFQEHNSY) and 356 to 390 (LEDNSWVFPSPPKSSETAFGESKSKILPSPNLPPL). Phosphoserine is present on serine 365.

In terms of assembly, homodimer. Interacts with IKBKE, TBK1 and TICAM1. Interacts with TAX1BP1. Interacts with CALCOCO2. Post-translationally, ubiquitinated via 'Lys-48'-linked polyubiquitination by TRIM38, leading to its degradation.

The protein localises to the cytoplasm. Functionally, adapter protein which binds TBK1 and IKBKE playing a role in antiviral innate immunity. Activates serine/threonine-protein kinase TBK1 and facilitates its oligomerization. Enhances the phosphorylation of NF-kappa-B p65 subunit RELA by TBK1. Promotes TBK1-induced as well as TNF-alpha or PMA-induced activation of NF-kappa-B. Participates in IFNB promoter activation via TICAM1. The polypeptide is 5-azacytidine-induced protein 2 (Azi2) (Rattus norvegicus (Rat)).